A 119-amino-acid chain; its full sequence is Large ribosomal subunit protein bL20 (119 aa).

The protein belongs to the bacterial ribosomal protein bL20 family.

In terms of biological role, binds directly to 23S ribosomal RNA and is necessary for the in vitro assembly process of the 50S ribosomal subunit. It is not involved in the protein synthesizing functions of that subunit. The polypeptide is Large ribosomal subunit protein bL20 (Bradyrhizobium diazoefficiens (strain JCM 10833 / BCRC 13528 / IAM 13628 / NBRC 14792 / USDA 110)).